A 521-amino-acid chain; its full sequence is Fucosyltransferase 3 (521 aa).

Over residues 1 to 12 (MKRGKKNSDAGD) the composition is skewed to basic and acidic residues. Residues 1-29 (MKRGKKNSDAGDRLTNSDTRTGSSELNAM) form a disordered region. Residues 1–39 (MKRGKKNSDAGDRLTNSDTRTGSSELNAMMKPSLSSMKT) lie on the Cytoplasmic side of the membrane. The segment covering 14 to 26 (LTNSDTRTGSSEL) has biased composition (polar residues). The chain crosses the membrane as a helical; Signal-anchor for type II membrane protein span at residues 40–60 (MGLLLAVLMVASVMFSLSVVL). The Lumenal portion of the chain corresponds to 61–521 (RDPPSDDVIE…QATLFHGCKD (461 aa)). N-linked (GlcNAc...) asparagine glycans are attached at residues asparagine 152, asparagine 222, and asparagine 493.

This sequence belongs to the glycosyltransferase 37 family. In terms of tissue distribution, expressed in roots, stems, leaves, flowers, siliques and seedlings.

The protein resides in the golgi apparatus. It is found in the golgi stack membrane. The protein operates within protein modification; protein glycosylation. Functionally, may be involved in cell wall biosynthesis. May act as a fucosyltransferase. The polypeptide is Fucosyltransferase 3 (FUT3) (Arabidopsis thaliana (Mouse-ear cress)).